Here is a 113-residue protein sequence, read N- to C-terminus: Ig kappa chain V-II region 26-10 (113 aa).

Residues 1–23 (DVVMTQTPLSLPVSLGDQASISC) form a framework-1 region. The cysteines at positions 23 and 93 are disulfide-linked. Residues 24-39 (RSSQSLVHSNGNTYLN) form a complementarity-determining-1 region. The framework-2 stretch occupies residues 40–54 (WYLQKAGQSPKLLIY). Residues 55–61 (KVSNRFS) form a complementarity-determining-2 region. Residues 62 to 93 (GVPDRFSGSGSGTDFTLKISRVEAEDLGIYFC) are framework-3. The segment at 94 to 102 (SQTTHVPPT) is complementarity-determining-3. The tract at residues 103-112 (FGGGTKLEIK) is framework-4.

This is Ig kappa chain V-II region 26-10 from Mus musculus (Mouse).